A 1534-amino-acid polypeptide reads, in one-letter code: DNA polymerase alpha catalytic subunit (1534 aa).

The span at 1 to 12 (MDEGSADAGASG) shows a compositional bias: low complexity. 3 disordered regions span residues 1 to 23 (MDEG…SEAV), 96 to 141 (THRT…LSAA), and 864 to 905 (FNST…GPSY). Residues 116–125 (RKRKQPRPQS) are compositionally biased toward basic residues. Residues 127-141 (RPPQQSAAAASLSAA) show a composition bias toward low complexity. Basic and acidic residues-rich tracts occupy residues 864–882 (FNST…RPDE) and 889–898 (DEGHHVDQGK). The Zn(2+) site is built by cysteine 1340, cysteine 1343, cysteine 1383, cysteine 1386, cysteine 1422, cysteine 1427, cysteine 1448, and cysteine 1454. The segment at 1340 to 1386 (CPSCSTTFDCPPVSSLIIGSSSGNVSNPNEGNDASINFWRRMRCPRC) adopts a CysA-type zinc-finger fold. The CysB motif motif lies at 1422–1451 (CDDEGCKYSTHSVNLRVMGDSERGTICPNY).

Belongs to the DNA polymerase type-B family.

The protein resides in the nucleus. The enzyme catalyses DNA(n) + a 2'-deoxyribonucleoside 5'-triphosphate = DNA(n+1) + diphosphate. Polymerase alpha in a complex with DNA primase is a replicative polymerase. The protein is DNA polymerase alpha catalytic subunit of Oryza sativa subsp. japonica (Rice).